An 835-amino-acid chain; its full sequence is Cell division control protein 48 (835 aa).

The interval 1 to 21 (MGEEHKPLLDASGVDPREEDK) is disordered. 257-263 (PGTGKTL) provides a ligand contact to ATP. Glycyl lysine isopeptide (Lys-Gly) (interchain with G-Cter in ubiquitin) cross-links involve residues Lys305, Lys322, and Lys346. Residues Asn358 and His394 each contribute to the ATP site. Ser472 and Ser519 each carry phosphoserine. A Glycyl lysine isopeptide (Lys-Gly) (interchain with G-Cter in ubiquitin) cross-link involves residue Lys522. ATP is bound at residue 531–536 (GTGKTL). Glycyl lysine isopeptide (Lys-Gly) (interchain with G-Cter in ubiquitin) cross-links involve residues Lys539, Lys594, and Lys673. Residues 720 to 729 (EAEKEVKVEG) show a composition bias toward basic and acidic residues. The disordered stretch occupies residues 720–746 (EAEKEVKVEGEDVEMTDEGAKAEQEPE). Residue Thr735 is modified to Phosphothreonine. Ser770 is subject to Phosphoserine. The segment at 792-835 (SNFNFNDAPLGTTATDNANSNNSAPSGAGAAFGSNAEEDDDLYS) is disordered. A compositionally biased stretch (low complexity) spans 802–826 (GTTATDNANSNNSAPSGAGAAFGSN).

The protein belongs to the AAA ATPase family. In terms of assembly, component of the heterotrimeric CDC48-NPL4-UFD1 ATPase complex. The CDC48-NPL4-UFD1 ATPase complex interacts with the HRD1 ubiquitin ligase complex composed of the E3 ligase HRD1, its cofactors HRD3, USA1 and DER1, substrate recruiting factor YOS9 and CDC48-binding protein UBX2. Interaction between the complexes is mediated by interaction between CDC48-NPL4-UFD1 complex member CDC48 and HRD1 complex member UBX2. Forms a complex composed of CDC48, NPL4, UFD1, UFD2 and SHP1. Forms a complex composed of CDC48, NPL4, UFD1, DOA1, SHP1 and deubiquitinase OTU1; within the complex interacts with DOA1/UFD3 and OTU1 to prevent multiubiquitination of substrates. Interacts with UFD2, to add further ubiquitin moieties; the interaction with UFD2 is prevented by DOA1/UFD3. Forms a complex composed of CDC48, DOA1, deubiquitinase UBP3 and probably BRE5; within the complex interacts with DOA1 and UBP3. Interacts (via C-terminus) with DOA1 (via PUL domain); the interaction is direct. Interacts with NPL4. Interacts with SHP1/UBX1, UBX2, UBX3, UBX4, UBX5, UBX6 and UBX7. Interacts with VMS1; the interaction recruits CDC48 to the mitochondria in response to mitochondrial stress. Component of the ribosome quality control complex (RQC), composed of the E3 ubiquitin ligase RKR1/LTN1, RQC1 and RQC2, as well as CDC48 and its ubiquitin-binding cofactors. RQC forms a stable complex with 60S ribosomal subunits. Interacts with ASE1 and CDC5; the interaction is likely to result in their degradation. Component of the DSCc E3 ligase complexes composed of at least TUL1, DSC2, DSC3, UBX3, CDC48 as well as VLD1 for the vacuole-localized complex or GLD1 for the Golgi/endosome-localized complex.

The protein localises to the microsome. The protein resides in the endoplasmic reticulum. It localises to the cytoplasm. The enzyme catalyses ATP + H2O = ADP + phosphate + H(+). With respect to regulation, the first ATP-binding region has low ATPase activity. The second ATP-binding region is responsible for ATPase activity. ATP binding to the first ATP-binding region induces intrinsic activity of the second ATP-binding region. While ATP binding to the first ATP-binding region appears to prevent ATP hydrolysis by the second ATP-binding region, ADP-binding to first region promotes the coordinate and cooperative ATPase cycle of the second ATP-binding region. ATP binding to the first ATP-binding region induces a conformational change, promoting the rotation of the first ATP-binding region relative to the second ATP-binding region in the hexamer. Its function is as follows. ATP-dependent chaperone which probably uses the energy provided by ATP hydrolysis to generate mechanical force to unfold substrate proteins, disassemble protein complexes, and disaggregate protein aggregates. By recruiting and promoting the degradation of ubiquitinated proteins, plays a role in the ubiquitin fusion degradation (UFD) pathway. Has a role in the endoplasmic reticulum-associated degradation (ERAD) pathway which mediates the cytoplasmic elimination of misfolded proteins exported from the ER. Required for the proteasome-dependent processing/activation of MGA2 and SPT23 transcription factors leading to the subsequent expression of OLE1. Has an additional role in the turnover of OLE1 where it targets ubiquitinated OLE1 and other proteins to the ERAD. Regulates ubiquitin-mediated mitochondria protein degradation. Involved in spindle disassembly probably by promoting the degradation of spindle assembly factors ASE1 and CDC5 at the end of mitosis. Component of the ribosome quality control complex (RQC), a ribosome-associated complex that mediates ubiquitination and extraction of incompletely synthesized nascent chains for proteasomal degradation. CDC48 may provide the mechanical force that dislodges the polyubiquitinated nascent peptides from the exit channel. Required for ribophagy, a process which relocalizes ribosomal particles into the vacuole for degradation in response to starvation. Component of the DSC E3 ubiquitin ligase complexes that tag proteins present in Golgi, endosome and vacuole membranes and function in protein homeostasis under non-stress conditions and support a role in protein quality control. Substrate initially binds through the attached polyubiquitin chain to UDF1/NPL4 and then moves through the pore of the ATPase rings and is thereby unfolded. Acts on a broad range of even well-folded proteins via ubiquitin-binding and unfolding to initiate substrate processing. Involved in degradation of mislocalized tail-anchored transmembrane proteins extracted from the mitochondrion outer membrane by MSP1 and ubiquitinated by DOA10. The chain is Cell division control protein 48 from Saccharomyces cerevisiae (strain ATCC 204508 / S288c) (Baker's yeast).